A 540-amino-acid polypeptide reads, in one-letter code: Tyrosine-protein kinase transforming protein erbB (540 aa).

Positions 132–399 constitute a Protein kinase domain; sequence FKKVKVLGFG…KMARDPPRYL (268 aa). Residues 138–146 and lysine 165 each bind ATP; that span reads LGFGAFGTV. Aspartate 257 serves as the catalytic Proton acceptor.

It belongs to the protein kinase superfamily. Tyr protein kinase family. EGF receptor subfamily.

It catalyses the reaction L-tyrosyl-[protein] + ATP = O-phospho-L-tyrosyl-[protein] + ADP + H(+). This Avian erythroblastosis virus (strain ts167) protein is Tyrosine-protein kinase transforming protein erbB (V-ERBB).